We begin with the raw amino-acid sequence, 1380 residues long: DNA-directed RNA polymerase subunit beta (1380 aa).

This sequence belongs to the RNA polymerase beta chain family. The RNAP catalytic core consists of 2 alpha, 1 beta, 1 beta' and 1 omega subunit. When a sigma factor is associated with the core the holoenzyme is formed, which can initiate transcription.

The enzyme catalyses RNA(n) + a ribonucleoside 5'-triphosphate = RNA(n+1) + diphosphate. DNA-dependent RNA polymerase catalyzes the transcription of DNA into RNA using the four ribonucleoside triphosphates as substrates. This is DNA-directed RNA polymerase subunit beta from Ehrlichia chaffeensis (strain ATCC CRL-10679 / Arkansas).